A 405-amino-acid chain; its full sequence is Phosphopentomutase (405 aa).

Residues aspartate 10, aspartate 303, histidine 308, aspartate 344, histidine 345, and histidine 356 each contribute to the Mn(2+) site.

The protein belongs to the phosphopentomutase family. The cofactor is Mn(2+).

Its subcellular location is the cytoplasm. The catalysed reaction is 2-deoxy-alpha-D-ribose 1-phosphate = 2-deoxy-D-ribose 5-phosphate. It catalyses the reaction alpha-D-ribose 1-phosphate = D-ribose 5-phosphate. It functions in the pathway carbohydrate degradation; 2-deoxy-D-ribose 1-phosphate degradation; D-glyceraldehyde 3-phosphate and acetaldehyde from 2-deoxy-alpha-D-ribose 1-phosphate: step 1/2. In terms of biological role, isomerase that catalyzes the conversion of deoxy-ribose 1-phosphate (dRib-1-P) and ribose 1-phosphate (Rib-1-P) to deoxy-ribose 5-phosphate (dRib-5-P) and ribose 5-phosphate (Rib-5-P), respectively. This is Phosphopentomutase from Shewanella pealeana (strain ATCC 700345 / ANG-SQ1).